A 364-amino-acid polypeptide reads, in one-letter code: MNRATATINVTALKHNLSQIKALAPKSLAWAMIKSNGYGHGLVRVAKALSDANAFGVACIDEALTLREVGIKSPIIVMKGFYNEAELSQFARHRLGAVIHCSDQVSLLEKTNLTSSLSVWLKIDTGMNRLGFSVEQSPAVYNQLKTSSSIQKPIGLMTHLADADNENKTFTELQIKRFFSVTEKMIGPKSIVNSAGFFAYPNALVDWIRPGIILYGISPFGINYNSFKEKIEKKFRPVMTLSAKIIAIKNRRQNDSVGYGCTWSCPEDMPIAIVSIGYGDGYPRHAPSGTPVLLNGKICPLIGRVSMDMIAIDLRSQPNAQVGDDVILWGEGLPVEIIAEKAGTIAYELLCKITQRVQFIEIEK.

Lysine 34 functions as the Proton acceptor; specific for D-alanine in the catalytic mechanism. Lysine 34 carries the N6-(pyridoxal phosphate)lysine modification. Residue arginine 129 participates in substrate binding. The active-site Proton acceptor; specific for L-alanine is tyrosine 259. Residue methionine 307 coordinates substrate.

Belongs to the alanine racemase family. The cofactor is pyridoxal 5'-phosphate.

The catalysed reaction is L-alanine = D-alanine. Its pathway is amino-acid biosynthesis; D-alanine biosynthesis; D-alanine from L-alanine: step 1/1. Catalyzes the interconversion of L-alanine and D-alanine. May also act on other amino acids. The sequence is that of Alanine racemase (alr) from Coxiella burnetii (strain RSA 493 / Nine Mile phase I).